A 391-amino-acid chain; its full sequence is MTLQPASGARDLNPQQVRKNHLIASKLSSLYQLWGYERISPPHIERLDTLTAAGGISNNEILKIVSDEPLGLRPEITASIVRAASTRFNEYERPLRFWSAGTSFKCNQSIDGGIDIEESFQSGVELIGTKAINAEIELLSLLIESLEVIEIDQKYKMTLLIGNTYLLELILSSFDSTKIDQIKKILCDLDYIALTTLDVKEEQRMFIKTIMNMRGKPEEVLTNLQNIYGSNSYIDKLKELFTIIEPLAKEKGIEVQLDPTLGTKYKLYSGLTFSLVSSSTSAPVTIAKGGRYDDLVKKFSSSAQNCYGIGFSISVDKVRELVSTSKEKLVNNVKVLIAYKQSANLYKALKQQKELHRKGIISVISHEPLKTNDETNQLLKSNRCNKIEWID.

Belongs to the class-II aminoacyl-tRNA synthetase family. HisZ subfamily. Heteromultimer composed of HisG and HisZ subunits.

It is found in the cytoplasm. The protein operates within amino-acid biosynthesis; L-histidine biosynthesis; L-histidine from 5-phospho-alpha-D-ribose 1-diphosphate: step 1/9. Its function is as follows. Required for the first step of histidine biosynthesis. May allow the feedback regulation of ATP phosphoribosyltransferase activity by histidine. The protein is ATP phosphoribosyltransferase regulatory subunit of Prochlorococcus marinus (strain NATL1A).